The chain runs to 278 residues: MAEMELWFTEQQTPDLGFTCKITKTIYTAKTKYQDLAILETKQFGKMLVLDGAVQTTIVDEFCYHELIAHVPLFTHPNPKKVAVIGGGDGGVIREILKHEEVEKAYLIEIDQEVIEASKKYLPEISCALDDKRAEVIITDGIKFVSENKNMFDVIIVDSTDPVGPAVGLFESNFYQAVYECLKEDGLFVAQTESPFYDQDLIRNVFHSIKSIFPITRLYLGFIPTYPSGLWSFTMGSKKYDPLEIDTSKIKRIDTRYYNPELHKALFALPTFVQKIIE.

One can recognise a PABS domain in the interval 5-238 (ELWFTEQQTP…GLWSFTMGSK (234 aa)). S-methyl-5'-thioadenosine is bound at residue Gln34. Spermidine-binding residues include His65 and Asp89. Residues Glu109 and 140–141 (DG) each bind S-methyl-5'-thioadenosine. Asp158 serves as the catalytic Proton acceptor. 158 to 161 (DSTD) provides a ligand contact to spermidine. Pro165 contacts S-methyl-5'-thioadenosine.

This sequence belongs to the spermidine/spermine synthase family. In terms of assembly, homodimer or homotetramer.

The protein localises to the cytoplasm. The enzyme catalyses S-adenosyl 3-(methylsulfanyl)propylamine + putrescine = S-methyl-5'-thioadenosine + spermidine + H(+). It participates in amine and polyamine biosynthesis; spermidine biosynthesis; spermidine from putrescine: step 1/1. Its function is as follows. Catalyzes the irreversible transfer of a propylamine group from the amino donor S-adenosylmethioninamine (decarboxy-AdoMet) to putrescine (1,4-diaminobutane) to yield spermidine. The chain is Polyamine aminopropyltransferase from Caldicellulosiruptor saccharolyticus (strain ATCC 43494 / DSM 8903 / Tp8T 6331).